Here is a 308-residue protein sequence, read N- to C-terminus: Neurexophilin-4 (308 aa).

The signal sequence occupies residues 1–23; the sequence is MRLLPEWFLLLFGPWLLRKAVSA. Residues 24-84 form an II region; that stretch reads QIPESGRPQY…GALARAGAAG (61 aa). Low complexity predominate over residues 40–51; sequence AAGAGAPGQQLP. Residues 40 to 59 form a disordered region; it reads AAGAGAPGQQLPEPRSSDGL. N-linked (GlcNAc...) asparagine glycans are attached at residues Asn-72, Asn-133, Asn-143, and Asn-149. Positions 85–163 are III; sequence ALPAQRTKRK…IVPPSKRVEF (79 aa). Positions 164–224 are IV (linker domain); it reads GGVWLPGPVP…PLGGALGVPG (61 aa). A v (Cys-rich) region spans residues 225-308; that stretch reads AKESRAFNCH…NFQSEHPYFG (84 aa).

The protein belongs to the neurexophilin family. In terms of processing, may be proteolytically processed at the boundary between the N-terminal non-conserved and the central conserved domain in neuron-like cells. Expressed in brain, spleen, and testis.

The protein localises to the secreted. Its function is as follows. May be signaling molecules that resemble neuropeptides and that act by binding to alpha-neurexins and possibly other receptors. The polypeptide is Neurexophilin-4 (NXPH4) (Homo sapiens (Human)).